The chain runs to 117 residues: Large ribosomal subunit protein uL18 (117 aa).

This sequence belongs to the universal ribosomal protein uL18 family. In terms of assembly, part of the 50S ribosomal subunit; part of the 5S rRNA/L5/L18/L25 subcomplex. Contacts the 5S and 23S rRNAs.

In terms of biological role, this is one of the proteins that bind and probably mediate the attachment of the 5S RNA into the large ribosomal subunit, where it forms part of the central protuberance. The protein is Large ribosomal subunit protein uL18 of Tolumonas auensis (strain DSM 9187 / NBRC 110442 / TA 4).